Here is a 227-residue protein sequence, read N- to C-terminus: NADH-quinone oxidoreductase subunit C (227 aa).

Belongs to the complex I 30 kDa subunit family. NDH-1 is composed of 14 different subunits. Subunits NuoB, C, D, E, F, and G constitute the peripheral sector of the complex.

Its subcellular location is the cell inner membrane. It carries out the reaction a quinone + NADH + 5 H(+)(in) = a quinol + NAD(+) + 4 H(+)(out). Functionally, NDH-1 shuttles electrons from NADH, via FMN and iron-sulfur (Fe-S) centers, to quinones in the respiratory chain. The immediate electron acceptor for the enzyme in this species is believed to be ubiquinone. Couples the redox reaction to proton translocation (for every two electrons transferred, four hydrogen ions are translocated across the cytoplasmic membrane), and thus conserves the redox energy in a proton gradient. This chain is NADH-quinone oxidoreductase subunit C, found in Legionella pneumophila (strain Corby).